The primary structure comprises 502 residues: Glutamate--tRNA ligase (502 aa).

The 'HIGH' region motif lies at 9-19 (PSPTGFPHVGT). Residues 250-254 (KLSKR) carry the 'KMSKS' region motif. Lys253 serves as a coordination point for ATP.

The protein belongs to the class-I aminoacyl-tRNA synthetase family. Glutamate--tRNA ligase type 1 subfamily. Monomer.

It localises to the cytoplasm. The enzyme catalyses tRNA(Glu) + L-glutamate + ATP = L-glutamyl-tRNA(Glu) + AMP + diphosphate. In terms of biological role, catalyzes the attachment of glutamate to tRNA(Glu) in a two-step reaction: glutamate is first activated by ATP to form Glu-AMP and then transferred to the acceptor end of tRNA(Glu). This Acinetobacter baumannii (strain SDF) protein is Glutamate--tRNA ligase.